We begin with the raw amino-acid sequence, 334 residues long: Malate dehydrogenase, mitochondrial (334 aa).

A mitochondrion-targeting transit peptide spans 1-17 (MLSRVAKRAFSSTVANP). Residues 24–30 (GAGGGIG) and Asp50 contribute to the NAD(+) site. Positions 99 and 105 each coordinate substrate. Residues Asn112 and 135 to 137 (ISN) each bind NAD(+). Positions 137 and 171 each coordinate substrate. The residue at position 177 (Ser177) is a Phosphoserine. The Proton acceptor role is filled by His195. Phosphothreonine is present on Thr199. Met245 provides a ligand contact to NAD(+).

This sequence belongs to the LDH/MDH superfamily. MDH type 1 family. As to quaternary structure, homodimer.

The protein resides in the mitochondrion matrix. It carries out the reaction (S)-malate + NAD(+) = oxaloacetate + NADH + H(+). This is Malate dehydrogenase, mitochondrial (MDH1) from Saccharomyces cerevisiae (strain ATCC 204508 / S288c) (Baker's yeast).